A 224-amino-acid polypeptide reads, in one-letter code: uncharacterized protein (224 aa).

It to M.tuberculosis Rv2558.

This is an uncharacterized protein from Mycobacterium tuberculosis (strain CDC 1551 / Oshkosh).